The primary structure comprises 436 residues: MTKQPFYKSLYVQVLVAIAIGIALGHWYPETAVAMKPFGDGFVKLIKMAIAPIIFCTVVTGIAGMQSMKSVGKTGGMALLYFEVVSTVALIIGLVVVNVVQPGAGMHVDPNTLDTSKIAAYAAAGEKQSTVDFLMNVIPGTVVGAFANGDILQVLFFSVLFGYALHRLGSYGKPVFEFIERVSHVMFNIINVIMKVAPIGAFGAMAFTIGAYGVGSLVQLGQLMLCFYITCILFVLIVLGGIARAHGFSILRFIRYIREELLIVLGTSSSESALPRMIDKMEKLGCNKSVVGLVIPTGYSFNLDGTSIYLTMAAVFIAQATDTPMDITHQITLLLVLLIASKGAAGVTGSGFIVLAATLSAVGHLPVAGLALILGIDRFMSEARALTNLVGNGVATVVVSKWCKQLDEGTLQRELAGEGNASSPASDIPVGGREAV.

Helical transmembrane passes span 14-34 (VLVA…TAVA), 45-65 (LIKM…IAGM), 77-97 (MALL…LVVV), 142-162 (VVGA…VLFG), 198-218 (PIGA…GSLV), 223-243 (LMLC…GGIA), 290-310 (VVGL…SIYL), 331-351 (ITLL…TGSG), and 353-373 (IVLA…LALI). The segment at 414–436 (ELAGEGNASSPASDIPVGGREAV) is disordered.

The protein belongs to the dicarboxylate/amino acid:cation symporter (DAACS) (TC 2.A.23) family.

Its subcellular location is the cell inner membrane. Its function is as follows. Responsible for the transport of dicarboxylates such as succinate, fumarate, and malate from the periplasm across the membrane. The protein is C4-dicarboxylate transport protein 2 of Pseudomonas aeruginosa (strain UCBPP-PA14).